Here is a 192-residue protein sequence, read N- to C-terminus: dCTP deaminase, dUMP-forming (192 aa).

Residues 101–106 (KSSLGR), aspartate 119, 127–129 (TLE), glutamine 148, tyrosine 162, and glutamine 174 contribute to the dCTP site. The active-site Proton donor/acceptor is the glutamate 129. Positions 165-184 (GAYGNRYQGQRGPTASRSHL) are disordered. Residues 171 to 183 (YQGQRGPTASRSH) show a composition bias toward polar residues.

This sequence belongs to the dCTP deaminase family. Homotrimer.

It carries out the reaction dCTP + 2 H2O = dUMP + NH4(+) + diphosphate. Its pathway is pyrimidine metabolism; dUMP biosynthesis; dUMP from dCTP: step 1/1. Bifunctional enzyme that catalyzes both the deamination of dCTP to dUTP and the hydrolysis of dUTP to dUMP without releasing the toxic dUTP intermediate. This chain is dCTP deaminase, dUMP-forming, found in Kocuria rhizophila (strain ATCC 9341 / DSM 348 / NBRC 103217 / DC2201).